A 137-amino-acid polypeptide reads, in one-letter code: Large ribosomal subunit protein uL16 (137 aa).

Belongs to the universal ribosomal protein uL16 family. Part of the 50S ribosomal subunit.

In terms of biological role, binds 23S rRNA and is also seen to make contacts with the A and possibly P site tRNAs. The polypeptide is Large ribosomal subunit protein uL16 (Methylobacterium sp. (strain 4-46)).